A 372-amino-acid chain; its full sequence is Glutamate 5-kinase (372 aa).

Residue lysine 14 participates in ATP binding. The substrate site is built by serine 54, aspartate 141, and asparagine 153. 173 to 174 is a binding site for ATP; the sequence is TD. A PUA domain is found at 280-358; the sequence is RGTLVLDAGA…DAIESLLGYS (79 aa).

Belongs to the glutamate 5-kinase family.

Its subcellular location is the cytoplasm. It carries out the reaction L-glutamate + ATP = L-glutamyl 5-phosphate + ADP. Its pathway is amino-acid biosynthesis; L-proline biosynthesis; L-glutamate 5-semialdehyde from L-glutamate: step 1/2. Its function is as follows. Catalyzes the transfer of a phosphate group to glutamate to form L-glutamate 5-phosphate. This chain is Glutamate 5-kinase, found in Pseudomonas putida (strain W619).